The chain runs to 913 residues: MKEDTIIQKNLFAIDNENNEQKEITKIPEDLSWEDLKKESQKRPRQRKNTTNLINKFKTDLISKNKNVCINEESYSYKTVSKLKLTPVMKHYVTLKEENKDRLLLYRLGDFFECFFEDAVLISNLLEITLTSKDAGKEIGKIPMAGVPYHAMERYCADLIKKNYSVVICDQLEKSSGNYGTPIKRGITRIITPGTVIEEGMLIAKKNNWITAIYLSEENSNESYEWGISKADVSTGELITMEGQSLSKLFDEIIKLDSSEIIIGSNEVRNLLMNGNSQISYTVSQETNFGINEANYLIKKYFQIVSLEGIGLKNLNNATRSLGGLLNYLKKINPLNLDKDSSVKISLDFPQIQFCHNKLIIDYQTQKNLEIKNTQRENNYVGSLLWSIDRTYTCMGARCLRRWIDSPLLNVNEIYKRQNIISNFIESKQVRMDTQNLLRAMGDLERLAGRACAGHASPRDLIAIAEGLKKLPRIKSIIELFKYDLPDWTDQLKNIDEELLELADTISFQLIEHPPLNISEGGMIHDGVDNILDGLRNLMDDYSEWLNQEELKERKISKISNLKIQFHKNFGYYISINKSKVNLAPQHWIKRQTLTNEERYITTDIKNKENKIFQIKSRASSREYEIFCELRKMVAEKTKQIRSIAKSIASLDALLGLSITSVENNFIKPALIPINDSQKKNSTKIIAGRNPIVEQLLNDKKFTANDICFDDNQKLIILTGPNASGKSCFIRQIGLIQILAQIGSFIPANKAEIKIADRIFTRIGAVDDQSSGQSTFMVEMSETASILNQATSSSLVLLDEIGRGTSTFDGLSIAWSVSEYLAKKIKCNTIFATHYHELNYLKNSNKNIENFQVLVEQNNDQIIFSHKIKKGGSNKSYGIEAAKLAGVPREVIEKAKLVLNSLEENNKFNKNND.

Gly-720–Ser-727 serves as a coordination point for ATP.

This sequence belongs to the DNA mismatch repair MutS family.

Its function is as follows. This protein is involved in the repair of mismatches in DNA. It is possible that it carries out the mismatch recognition step. This protein has a weak ATPase activity. The polypeptide is DNA mismatch repair protein MutS (Prochlorococcus marinus (strain MIT 9312)).